A 1013-amino-acid chain; its full sequence is Endosome/lysosome-associated apoptosis and autophagy regulator 1 (1013 aa).

Residues 1-41 (MAEPGHSHHLSARVRGRTERRIPRLWRLLLWAGTAFQVTQG) form the signal peptide. Residues 42-910 (TGPELHACKE…ICKTIDFWLK (869 aa)) are Extracellular-facing. Residue Asn153 is glycosylated (N-linked (GlcNAc...) asparagine). Cystine bridges form between Cys278–Cys295, Cys308–Cys330, and Cys311–Cys342. 2 N-linked (GlcNAc...) asparagine glycosylation sites follow: Asn404 and Asn672. In terms of domain architecture, MRH spans 656 to 858 (NDCTFSRNTP…LWESAAACPL (203 aa)). Intrachain disulfides connect Cys658-Cys704, Cys714-Cys739, Cys808-Cys844, and Cys820-Cys856. Residues 911 to 931 (VGISAGTCTAILLTVLTCYFW) traverse the membrane as a helical segment. The Cytoplasmic portion of the chain corresponds to 932–1013 (KKNQKLEYKY…TSSGGLDMDL (82 aa)).

The protein belongs to the ELAPOR family. Interacts with HSPA5; may regulate the function of HSPA5 in apoptosis and cell proliferation. As to expression, expressed in normal endometrium but overexpressed in endometroid tumors.

It is found in the cell membrane. It localises to the late endosome membrane. Its subcellular location is the golgi apparatus. The protein resides in the trans-Golgi network membrane. The protein localises to the lysosome membrane. It is found in the endoplasmic reticulum membrane. In terms of biological role, may protect cells from cell death by inducing cytosolic vacuolization and up-regulating the autophagy pathway. May play a role in apoptosis and cell proliferation through its interaction with HSPA5. The chain is Endosome/lysosome-associated apoptosis and autophagy regulator 1 from Homo sapiens (Human).